We begin with the raw amino-acid sequence, 388 residues long: Protein kes1 (388 aa).

This sequence belongs to the OSBP family.

Its function is as follows. Lipid transporter involved in lipid countertransport between the Golgi complex and membranes of the endoplasmic reticulum: specifically exchanges sterol with phosphatidylinositol 4-phosphate (PI4P), delivering sterol to the Golgi in exchange for PI4P, which is degraded by the SAC1 phosphatase in the endoplasmic reticulum. This Schizosaccharomyces pombe (strain 972 / ATCC 24843) (Fission yeast) protein is Protein kes1 (kes1).